The chain runs to 451 residues: UDP-N-acetylmuramoylalanine--D-glutamate ligase (451 aa).

ATP is bound at residue 120-126 (GSNGKTT).

Belongs to the MurCDEF family.

The protein resides in the cytoplasm. The enzyme catalyses UDP-N-acetyl-alpha-D-muramoyl-L-alanine + D-glutamate + ATP = UDP-N-acetyl-alpha-D-muramoyl-L-alanyl-D-glutamate + ADP + phosphate + H(+). The protein operates within cell wall biogenesis; peptidoglycan biosynthesis. In terms of biological role, cell wall formation. Catalyzes the addition of glutamate to the nucleotide precursor UDP-N-acetylmuramoyl-L-alanine (UMA). In Bacillus velezensis (strain DSM 23117 / BGSC 10A6 / LMG 26770 / FZB42) (Bacillus amyloliquefaciens subsp. plantarum), this protein is UDP-N-acetylmuramoylalanine--D-glutamate ligase.